Reading from the N-terminus, the 1453-residue chain is Collagen alpha-1(I) chain (1453 aa).

The signal sequence occupies residues 1-22; the sequence is MFSFVDSRLLLLIAATVLLTRG. A propeptide spans 23 to 151 (N-terminal propeptide); that stretch reads EGEEDIQTGS…PPGLGGNFAP (129 aa). The VWFC domain maps to 31–89; it reads GSCVQDGLTYNDKDVWKPEPCQICVCDSGNILCDEVICEDTSDCPNAEIPFGECCPICP. The segment at 98–1203 is disordered; it reads PESAGVEGPK…PQEKAHDGGR (1106 aa). The segment covering 106 to 116 has biased composition (basic and acidic residues); it reads PKGDTGPRGDR. Residues 131–143 show a composition bias toward pro residues; the sequence is PGLPGPPGPPGPP. Glutamine 152 bears the Pyrrolidone carboxylic acid mark. The residue at position 160 (lysine 160) is an Allysine. Residues 162 to 176 are compositionally biased toward low complexity; it reads AGVAVPGPMGPAGPR. 4-hydroxyproline occurs at positions 179, 182, 185, 194, 197, 200, 215, 230, 236, 245, and 251. The span at 187-206 shows a compositional bias: low complexity; the sequence is PQGFQGPPGEPGEPGASGPM. The residue at position 254 (lysine 254) is a 5-hydroxylysine; alternate. Lysine 254 carries O-linked (Gal...) hydroxylysine; partial glycosylation. Positions 265-284 are enriched in low complexity; that stretch reads AKGQPGPAGPKGEPGSPGEN. 4-hydroxyproline occurs at positions 269, 278, 281, 287, 296, 302, 317, 323, 332, and 335. Over residues 307 to 319 the composition is skewed to low complexity; that stretch reads PAGARGNDGAPGA. The segment covering 320–334 has biased composition (pro residues); that stretch reads AGPPGPTGPAGPPGF. The segment covering 350-361 has biased composition (low complexity); it reads RGSEGPQGSRGE. 8 positions are modified to 4-hydroxyproline: proline 362, proline 365, proline 377, proline 383, proline 392, proline 398, proline 401, and proline 416. Residues 368 to 418 are compositionally biased toward low complexity; the sequence is AGAAGPAGNPGADGQPGAKGATGAPGIAGAPGFPGARGPSGPQGPSGAPGP. At lysine 419 the chain carries 5-hydroxylysine. Residues proline 425, proline 428, proline 440, proline 449, proline 464, proline 470, proline 479, and proline 485 each carry the 4-hydroxyproline modification. Residues 463-482 show a composition bias toward low complexity; that stretch reads EPGPAGLPGPAGERGAPGSR. Lysine 494 bears the 5-hydroxylysine mark. Residues proline 497, proline 503, proline 512, proline 518, proline 524, proline 533, proline 536, proline 545, proline 554, proline 560, proline 572, proline 581, proline 584, proline 590, proline 593, proline 611, proline 629, proline 635, proline 641, proline 647, proline 653, proline 659, proline 671, proline 680, proline 692, proline 704, proline 707, proline 713, proline 719, proline 728, and proline 737 each carry the 4-hydroxyproline modification. A compositionally biased stretch (low complexity) spans 527–581; sequence KGLTGSPGSPGPDGKTGPPGPAGQDGRPGPAGPPGARGQAGVMGFPGPKGAAGEP. A compositionally biased stretch (low complexity) spans 623 to 664; sequence QGPAGAPGFQGLPGPAGPPGEAGKPGEQGVPGNAGAPGPAGA. Low complexity predominate over residues 685–722; it reads PRGANGAPGNDGAKGDAGAPGAPGNEGPPGLEGMPGER. At lysine 740 the chain carries 5-hydroxylysine. 12 positions are modified to 4-hydroxyproline: proline 746, proline 761, proline 767, proline 776, proline 788, proline 794, proline 797, proline 806, proline 812, proline 830, proline 839, and proline 848. Positions 800-827 are enriched in low complexity; that stretch reads AGFAGPPGADGQPGAKGETGDAGAKGDA. Positions 835–883 are enriched in low complexity; it reads PTGAPGPAGZVGAPGPKGARGSAGPPGATGFPGAAGRVGPPGPSGNIGL. Lysine 851 bears the 5-hydroxylysine mark. Proline 860 and proline 866 each carry 4-hydroxyproline. 3-hydroxyproline is present on proline 874. Proline 875, proline 884, proline 887, proline 908, proline 911, proline 917, proline 920, proline 926, proline 935, proline 953, proline 962, proline 965, proline 971, proline 986, proline 992, proline 998, proline 1007, and proline 1013 each carry 4-hydroxyproline. The span at 890–908 shows a compositional bias: low complexity; sequence AGKZGSKGPRGETGPAGRP. Pro residues predominate over residues 910–920; that stretch reads EPGPAGPPGPP. The segment covering 985–995 has biased composition (pro residues); it reads PPGPMGPPGLA. Residues 997–1021 are compositionally biased toward low complexity; sequence PPGEAGREGAPGAEGAPGRDGAAGP. 5-hydroxylysine; partial is present on lysine 1022. A compositionally biased stretch (pro residues) spans 1031–1046; it reads AGPPGAPGAPGAPGPV. 4-hydroxyproline is present on residues proline 1034, proline 1037, proline 1040, and proline 1067. Low complexity predominate over residues 1070–1081; the sequence is AGARGPAGPQGP. Basic and acidic residues predominate over residues 1082 to 1096; the sequence is RGDKGETGEQGDRGM. Lysine 1085 carries the 5-hydroxylysine; partial modification. Lysine 1097 carries the 5-hydroxylysine; alternate modification. The O-linked (Gal...) hydroxylysine; partial glycan is linked to lysine 1097. Proline 1109, proline 1112, proline 1115, proline 1133, and proline 1148 each carry 4-hydroxyproline. Low complexity predominate over residues 1115 to 1139; sequence PGEQGPSGASGPAGPRGPPGSAGAA. Proline 1153 is modified (3-hydroxyproline). Proline 1154 carries the 4-hydroxyproline modification. Residues 1166–1181 are compositionally biased toward pro residues; that stretch reads VGPPGPPGPPGPPGPP. The residue at position 1168 (proline 1168) is a 3-hydroxyproline. A 4-hydroxyproline modification is found at proline 1169. Proline 1171 is subject to 3-hydroxyproline. Proline 1172 is subject to 4-hydroxyproline. At proline 1174 the chain carries 3-hydroxyproline. A 4-hydroxyproline mark is found at proline 1175, proline 1178, and proline 1181. Residue lysine 1197 is modified to Allysine. Residues 1208 to 1453 constitute a propeptide, C-terminal propeptide; it reads DDANVMRDRD…GIDIGPVCFL (246 aa). The Fibrillar collagen NC1 domain maps to 1218–1453; the sequence is LEVDTTLKSL…GIDIGPVCFL (236 aa). Disulfide bonds link cysteine 1248/cysteine 1280, cysteine 1288/cysteine 1451, and cysteine 1359/cysteine 1404. Residues aspartate 1266, asparagine 1268, glutamine 1269, cysteine 1271, and aspartate 1274 each coordinate Ca(2+). Asparagine 1354 is a glycosylation site (N-linked (GlcNAc...) asparagine).

Belongs to the fibrillar collagen family. In terms of assembly, trimers of one alpha 2(I) and two alpha 1(I) chains. Post-translationally, contains mostly 4-hydroxyproline. Proline residues at the third position of the tripeptide repeating unit (G-X-Y) are 4-hydroxylated in some or all of the chains. In terms of processing, contains 3-hydroxyproline. This modification occurs on the first proline residue in the sequence motif Gly-Pro-Hyp, where Hyp is 4-hydroxyproline. Lysine residues at the third position of the tripeptide repeating unit (G-X-Y) are 5-hydroxylated in some or all of the chains. Post-translationally, O-glycosylated on hydroxylated lysine residues. The O-linked glycan consists of a Glc-Gal disaccharide. In terms of tissue distribution, forms the fibrils of tendon, ligaments and bones. In bones the fibrils are mineralized with calcium hydroxyapatite.

It is found in the secreted. Its subcellular location is the extracellular space. The protein resides in the extracellular matrix. Type I collagen is a member of group I collagen (fibrillar forming collagen). This is Collagen alpha-1(I) chain (COL1A1) from Gallus gallus (Chicken).